Reading from the N-terminus, the 428-residue chain is Stabilizer of axonemal microtubules 4 (428 aa).

The interval 201–231 (AKEETGFTEESNKNPIVFQPPSQALPGDPVL) is disordered.

In terms of assembly, microtubule inner protein component of sperm flagellar doublet microtubules. Interacts with PPP1CA.

Its subcellular location is the cell projection. The protein resides in the cilium. It localises to the cytoplasm. The protein localises to the cytoskeleton. It is found in the flagellum axoneme. This Bos taurus (Bovine) protein is Stabilizer of axonemal microtubules 4.